A 317-amino-acid polypeptide reads, in one-letter code: Acetyl-coenzyme A carboxylase carboxyl transferase subunit alpha (317 aa).

One can recognise a CoA carboxyltransferase C-terminal domain in the interval 40 to 293; that stretch reads LEVRVREAIV…GDVIANALGE (254 aa).

This sequence belongs to the AccA family. As to quaternary structure, acetyl-CoA carboxylase is a heterohexamer composed of biotin carboxyl carrier protein (AccB), biotin carboxylase (AccC) and two subunits each of ACCase subunit alpha (AccA) and ACCase subunit beta (AccD).

Its subcellular location is the cytoplasm. The catalysed reaction is N(6)-carboxybiotinyl-L-lysyl-[protein] + acetyl-CoA = N(6)-biotinyl-L-lysyl-[protein] + malonyl-CoA. The protein operates within lipid metabolism; malonyl-CoA biosynthesis; malonyl-CoA from acetyl-CoA: step 1/1. In terms of biological role, component of the acetyl coenzyme A carboxylase (ACC) complex. First, biotin carboxylase catalyzes the carboxylation of biotin on its carrier protein (BCCP) and then the CO(2) group is transferred by the carboxyltransferase to acetyl-CoA to form malonyl-CoA. This chain is Acetyl-coenzyme A carboxylase carboxyl transferase subunit alpha, found in Rhizobium etli (strain ATCC 51251 / DSM 11541 / JCM 21823 / NBRC 15573 / CFN 42).